We begin with the raw amino-acid sequence, 84 residues long: Mitochondrial import inner membrane translocase subunit Tim9 (84 aa).

The short motif at 36 to 60 (CFQSCITNFRIRKLDDEEQLCVYKC) is the Twin CX3C motif element. Intrachain disulfides connect Cys-36/Cys-60 and Cys-40/Cys-56.

The protein belongs to the small Tim family. As to quaternary structure, heterohexamer; composed of 3 copies of timm9 and 3 copies of timm10, named soluble 70 kDa complex. Associates directly with the TIM22 complex, whose core is composed of timm22. Interacts with the transmembrane regions of multi-pass transmembrane proteins in transit.

The protein resides in the mitochondrion inner membrane. In terms of biological role, component of the TIM22 complex, a complex that mediates the import and insertion of multi-pass transmembrane proteins into the mitochondrial inner membrane. The TIM22 complex forms a twin-pore translocase that uses the membrane potential as external driving force. The polypeptide is Mitochondrial import inner membrane translocase subunit Tim9 (timm9) (Dictyostelium discoideum (Social amoeba)).